The following is a 97-amino-acid chain: Osteocalcin (97 aa).

The signal sequence occupies residues 1–20 (MKAAALLLLAALLTFSLCRS). Residues 21–48 (APDGSDARSAKAFISHRQRAEMVRRQKR) constitute a propeptide that is removed on maturation. The Gla domain occupies 49 to 95 (HYAQDSGVAGAPPNPLEAQREVCELSPDCDELADQIGFQEAYRRFYG). 4 residues coordinate Ca(2+): Glu65, Glu69, Glu72, and Asp78. 4-carboxyglutamate occurs at positions 65, 69, and 72. Residues Cys71 and Cys77 are joined by a disulfide bond.

It belongs to the osteocalcin/matrix Gla protein family. In terms of processing, gamma-carboxyglutamate residues are formed by vitamin K dependent carboxylation by GGCX. These residues are essential for the binding of calcium.

It is found in the secreted. Its function is as follows. The carboxylated form is one of the main organic components of the bone matrix, which constitutes 1-2% of the total bone protein. The carboxylated form binds strongly to apatite and calcium. The sequence is that of Osteocalcin (BGLAP) from Gallus gallus (Chicken).